We begin with the raw amino-acid sequence, 208 residues long: FMN-dependent NADH:quinone oxidoreductase (208 aa).

FMN is bound by residues His10, 17 to 19 (SRS), 104 to 107 (MWNL), 148 to 153 (SNGGFY), and Asp184.

Belongs to the azoreductase type 1 family. As to quaternary structure, homodimer. FMN serves as cofactor.

It carries out the reaction 2 a quinone + NADH + H(+) = 2 a 1,4-benzosemiquinone + NAD(+). The enzyme catalyses N,N-dimethyl-1,4-phenylenediamine + anthranilate + 2 NAD(+) = 2-(4-dimethylaminophenyl)diazenylbenzoate + 2 NADH + 2 H(+). Quinone reductase that provides resistance to thiol-specific stress caused by electrophilic quinones. Functionally, also exhibits azoreductase activity. Catalyzes the reductive cleavage of the azo bond in aromatic azo compounds to the corresponding amines. Requires NADH, but not NADPH, as an electron donor for its activity. The enzyme can also reduce a wide range of sulfonated azo dyes. The substrate preference order is methyl Red &gt; Orange II &gt; Ponceau BS &gt; Ponceau S &gt; Orange G &gt; Amaranth. The sequence is that of FMN-dependent NADH:quinone oxidoreductase from Enterococcus faecalis (strain ATCC 700802 / V583).